The sequence spans 326 residues: Lipoyl synthase (326 aa).

7 residues coordinate [4Fe-4S] cluster: cysteine 68, cysteine 73, cysteine 79, cysteine 94, cysteine 98, cysteine 101, and serine 308. The 218-residue stretch at 80-297 (FNHGTATFMI…KDVAMGLGFS (218 aa)) folds into the Radical SAM core domain.

Belongs to the radical SAM superfamily. Lipoyl synthase family. [4Fe-4S] cluster serves as cofactor.

The protein localises to the cytoplasm. It catalyses the reaction [[Fe-S] cluster scaffold protein carrying a second [4Fe-4S](2+) cluster] + N(6)-octanoyl-L-lysyl-[protein] + 2 oxidized [2Fe-2S]-[ferredoxin] + 2 S-adenosyl-L-methionine + 4 H(+) = [[Fe-S] cluster scaffold protein] + N(6)-[(R)-dihydrolipoyl]-L-lysyl-[protein] + 4 Fe(3+) + 2 hydrogen sulfide + 2 5'-deoxyadenosine + 2 L-methionine + 2 reduced [2Fe-2S]-[ferredoxin]. The protein operates within protein modification; protein lipoylation via endogenous pathway; protein N(6)-(lipoyl)lysine from octanoyl-[acyl-carrier-protein]: step 2/2. Its function is as follows. Catalyzes the radical-mediated insertion of two sulfur atoms into the C-6 and C-8 positions of the octanoyl moiety bound to the lipoyl domains of lipoate-dependent enzymes, thereby converting the octanoylated domains into lipoylated derivatives. The protein is Lipoyl synthase of Aeromonas salmonicida (strain A449).